We begin with the raw amino-acid sequence, 127 residues long: Large ribosomal subunit protein uL18 (127 aa).

The disordered stretch occupies residues 1-26 (MASTLTVRKSLSDRAKARARRQARGR). Positions 17 to 26 (ARARRQARGR) are enriched in basic residues.

Belongs to the universal ribosomal protein uL18 family. In terms of assembly, part of the 50S ribosomal subunit; part of the 5S rRNA/L5/L18/L25 subcomplex. Contacts the 5S and 23S rRNAs.

Its function is as follows. This is one of the proteins that bind and probably mediate the attachment of the 5S RNA into the large ribosomal subunit, where it forms part of the central protuberance. In Cutibacterium acnes (strain DSM 16379 / KPA171202) (Propionibacterium acnes), this protein is Large ribosomal subunit protein uL18.